A 623-amino-acid polypeptide reads, in one-letter code: Zinc finger protein 143 (623 aa).

C2H2-type zinc fingers lie at residues 230-254 (FRCEHEGCGKLYTTAHHLKVHERSH), 260-284 (YICDHLGCGKKFATGYGLKSHVRTH), 290-314 (YRCQELNCLKSFKTSGDLQKHTRTH), 320-344 (FKCPFEGCGRSFTTSNIRKVHIRTH), 350-374 (YYCAEPNCGRAFASATNYKNHMRIH), 380-404 (YVCTVPGCDKRFTEYSSLYKHHVVH), and 410-433 (YNCNHCGKTYKQISTLAMHKRTAH).

The protein belongs to the GLI C2H2-type zinc-finger protein family.

The protein resides in the nucleus. In terms of biological role, transcriptional activator. Activates the gene for selenocysteine tRNA (tRNAsec). Binds to the activator element (AE) motif of the selenocysteine tRNA gene promoter. This Danio rerio (Zebrafish) protein is Zinc finger protein 143 (znf143).